The chain runs to 138 residues: Putative pre-16S rRNA nuclease (138 aa).

Belongs to the YqgF nuclease family.

It localises to the cytoplasm. Its function is as follows. Could be a nuclease involved in processing of the 5'-end of pre-16S rRNA. This chain is Putative pre-16S rRNA nuclease, found in Carboxydothermus hydrogenoformans (strain ATCC BAA-161 / DSM 6008 / Z-2901).